Here is a 472-residue protein sequence, read N- to C-terminus: Eukaryotic translation initiation factor 2 subunit 3 (472 aa).

Position 2 is an N-acetylalanine (Ala-2). Ser-16 is subject to Phosphoserine. Residues 39-248 (QATINIGTIG…IVKKIPVPPR (210 aa)) form the tr-type G domain. The tract at residues 48-55 (GHVAHGKS) is G1. 51-56 (AHGKST) lines the GTP pocket. The interval 76-80 (NITIK) is G2. Residues 134 to 137 (DCPG) are G3. Residues 190 to 193 (NKID) and 225 to 227 (SAQ) each bind GTP. A G4 region spans residues 190–193 (NKID). The interval 225-227 (SAQ) is G5. Positions 457 to 469 (GQIRRGVTIKPTV) are interacts with CDC123.

This sequence belongs to the TRAFAC class translation factor GTPase superfamily. Classic translation factor GTPase family. EIF2G subfamily. As to quaternary structure, eukaryotic translation initiation factor 2 eIF2 is a heterotrimeric complex composed of an alpha (EIF2S1), a beta (EIF2S2) and a gamma (EIF2S3) chain. eIF2 is member of the 43S pre-initiation complex (43S PIC). Interacts (via C-terminus) with CDC123; the interaction is direct.

It localises to the cytoplasm. It is found in the cytosol. The catalysed reaction is GTP + H2O = GDP + phosphate + H(+). In terms of biological role, member of the eIF2 complex that functions in the early steps of protein synthesis by forming a ternary complex with GTP and initiator tRNA. This complex binds to a 40S ribosomal subunit, followed by mRNA binding to form the 43S pre-initiation complex (43S PIC). Junction of the 60S ribosomal subunit to form the 80S initiation complex is preceded by hydrolysis of the GTP bound to eIF2 and release of an eIF2-GDP binary complex. In order for eIF2 to recycle and catalyze another round of initiation, the GDP bound to eIF2 must exchange with GTP by way of a reaction catalyzed by eIF-2B. In Bos taurus (Bovine), this protein is Eukaryotic translation initiation factor 2 subunit 3 (EIF2S3).